The chain runs to 377 residues: MSKGKIIVAMSGGVDSAVTAGLLMEEGYEVIGVNLRTWEYEAPVCDTTKKSCCSPEDIRDARDVGLSLKIPFYVVKMEKVFQEKVIDRFIDDYQHGKTPNPCVECNTFVKFGALFEKAKALGIDKIATGHYARIVRNGERYAISNGVDIGKNQAYYLYGLSQENLKNVTFPLGGMTKPEVREIARRMGLSVADKAESQEICFIPENDYRKFLEKKHVEFTPGFFKLRDGRIIGKHKGRENFTIGQRKGLGIAWRNPLYVIAIEDDGSVILGEENETYAESFSVIDVNYQGFAPLGEGESFECRVQVRYRHTPIRCRITKMNEDLVVNPLEEVRGVTPGQSAVFYPLNSDYLLLGGIIRKGSIRMQVAKEESAIAFRS.

Residues 9-16 (AMSGGVDS) and Leu35 each bind ATP. Cys105 (nucleophile) is an active-site residue. Cys105 and Cys201 are joined by a disulfide. An ATP-binding site is contributed by Gly129. Residues 151 to 153 (KNQ) are interaction with tRNA. Residue Cys201 is the Cysteine persulfide intermediate of the active site. The interaction with tRNA stretch occupies residues 307–308 (RY).

The protein belongs to the MnmA/TRMU family.

Its subcellular location is the cytoplasm. It carries out the reaction S-sulfanyl-L-cysteinyl-[protein] + uridine(34) in tRNA + AH2 + ATP = 2-thiouridine(34) in tRNA + L-cysteinyl-[protein] + A + AMP + diphosphate + H(+). Catalyzes the 2-thiolation of uridine at the wobble position (U34) of tRNA, leading to the formation of s(2)U34. The polypeptide is tRNA-specific 2-thiouridylase MnmA (Leptospira borgpetersenii serovar Hardjo-bovis (strain JB197)).